The sequence spans 140 residues: MPPKAAEKKPTTGGKAPAGKAPAEKKEAGKKTAAAASGDKKKRGKTRKETYSSYIYKVLKQVHPDTGISTRAMSILNSFVNDIFERVATEASKLAAYNKKSTISSREIQTSVRLILPGELAKHAVSEGTKAVTKYSSSAK.

Residues 1–10 (MPPKAAEKKP) are compositionally biased toward basic and acidic residues. A disordered region spans residues 1 to 48 (MPPKAAEKKPTTGGKAPAGKAPAEKKEAGKKTAAAASGDKKKRGKTRK). 2 positions are modified to N6-acetyllysine; alternate: Lys8 and Lys9. Residues Lys8 and Lys9 each participate in a glycyl lysine isopeptide (Lys-Gly) (interchain with G-Cter in SUMO); alternate cross-link. Residues 11–21 (TTGGKAPAGKA) show a composition bias toward low complexity. The residue at position 15 (Lys15) is an N6-acetyllysine. N6-acetyllysine; alternate is present on Lys25. Lys25 is covalently cross-linked (Glycyl lysine isopeptide (Lys-Gly) (interchain with G-Cter in SUMO); alternate). Lys26 participates in a covalent cross-link: Glycyl lysine isopeptide (Lys-Gly) (interchain with G-Cter in SUMO). Residue Lys134 forms a Glycyl lysine isopeptide (Lys-Gly) (interchain with G-Cter in ubiquitin) linkage.

This sequence belongs to the histone H2B family. In terms of assembly, the nucleosome is a histone octamer containing two molecules each of H2A, H2B, H3 and H4 assembled in one H3-H4 heterotetramer and two H2A-H2B heterodimers. The octamer wraps approximately 147 bp of DNA. Post-translationally, monoubiquitinated by the ubc2-bre1 complex to form H2BK123ub1. H2BK123ub1 gives a specific tag for epigenetic transcriptional activation and is also prerequisite for H3K4me and H3K79me formation. H2BK123ub1 also modulates the formation of double-strand breaks during meiosis and is a prerequisite for DNA-damage checkpoint activation. Acetylated by gcn5 to form H2BK11ac and H2BK16ac. H2BK16ac can also be formed by esa1. Acetylation of N-terminal lysines and particularly formation of H2BK11acK16ac has a positive effect on transcription. In terms of processing, sumoylation to form H2BK6su or H2BK7su, and probably also H2BK16su or H2BK17su, occurs preferentially near the telomeres and represses gene transcription.

It is found in the nucleus. Its subcellular location is the chromosome. Its function is as follows. Core component of nucleosome. Nucleosomes wrap and compact DNA into chromatin, limiting DNA accessibility to the cellular machineries which require DNA as a template. Histones thereby play a central role in transcription regulation, DNA repair, DNA replication and chromosomal stability. DNA accessibility is regulated via a complex set of post-translational modifications of histones, also called histone code, and nucleosome remodeling. In Aspergillus terreus (strain NIH 2624 / FGSC A1156), this protein is Histone H2B (htb1).